A 130-amino-acid chain; its full sequence is Small ribosomal subunit protein uS8y (130 aa).

This sequence belongs to the universal ribosomal protein uS8 family.

This Arabidopsis thaliana (Mouse-ear cress) protein is Small ribosomal subunit protein uS8y (RPS15AC).